The primary structure comprises 210 residues: Na(+)-translocating NADH-quinone reductase subunit D (210 aa).

The next 5 helical transmembrane spans lie at 42-62, 72-92, 103-123, 131-151, and 178-198; these read FVMT…VSLI, IIVQ…VLKA, VFVG…AFAM, LIDG…VGFF, and NGLM…IWVI.

The protein belongs to the NqrDE/RnfAE family. In terms of assembly, composed of six subunits; NqrA, NqrB, NqrC, NqrD, NqrE and NqrF.

It localises to the cell inner membrane. The enzyme catalyses a ubiquinone + n Na(+)(in) + NADH + H(+) = a ubiquinol + n Na(+)(out) + NAD(+). NQR complex catalyzes the reduction of ubiquinone-1 to ubiquinol by two successive reactions, coupled with the transport of Na(+) ions from the cytoplasm to the periplasm. NqrA to NqrE are probably involved in the second step, the conversion of ubisemiquinone to ubiquinol. This is Na(+)-translocating NADH-quinone reductase subunit D from Vibrio parahaemolyticus serotype O3:K6 (strain RIMD 2210633).